A 353-amino-acid polypeptide reads, in one-letter code: Aromatic amino acid aminotransferase (353 aa).

At K217 the chain carries N6-(pyridoxal phosphate)lysine.

The protein belongs to the class-II pyridoxal-phosphate-dependent aminotransferase family. Homodimer. Pyridoxal 5'-phosphate serves as cofactor.

It carries out the reaction an aromatic L-alpha-amino acid + 2-oxoglutarate = an aromatic oxo-acid + L-glutamate. In terms of biological role, aminotransferase that catalyzes the conversion of aromatic amino acids and 2-oxoglutarate into corresponding aromatic oxo acids and L-glutamate. The chain is Aromatic amino acid aminotransferase from Mycobacterium tuberculosis (strain ATCC 25177 / H37Ra).